The chain runs to 211 residues: ATP-dependent Clp protease proteolytic subunit (211 aa).

Ser107 (nucleophile) is an active-site residue. The active site involves His132.

It belongs to the peptidase S14 family. As to quaternary structure, fourteen ClpP subunits assemble into 2 heptameric rings which stack back to back to give a disk-like structure with a central cavity, resembling the structure of eukaryotic proteasomes.

It localises to the cytoplasm. It carries out the reaction Hydrolysis of proteins to small peptides in the presence of ATP and magnesium. alpha-casein is the usual test substrate. In the absence of ATP, only oligopeptides shorter than five residues are hydrolyzed (such as succinyl-Leu-Tyr-|-NHMec, and Leu-Tyr-Leu-|-Tyr-Trp, in which cleavage of the -Tyr-|-Leu- and -Tyr-|-Trp bonds also occurs).. Its function is as follows. Cleaves peptides in various proteins in a process that requires ATP hydrolysis. Has a chymotrypsin-like activity. Plays a major role in the degradation of misfolded proteins. In Xanthobacter autotrophicus (strain ATCC BAA-1158 / Py2), this protein is ATP-dependent Clp protease proteolytic subunit.